The chain runs to 227 residues: Phosphoribosylformylglycinamidine synthase subunit PurQ (227 aa).

One can recognise a Glutamine amidotransferase type-1 domain in the interval 2 to 227; sequence RWAIVRFPGA…FLGLVREVAR (226 aa). The active-site Nucleophile is the C85. Catalysis depends on residues H200 and E202.

In terms of assembly, part of the FGAM synthase complex composed of 1 PurL, 1 PurQ and 2 PurS subunits.

It localises to the cytoplasm. The catalysed reaction is N(2)-formyl-N(1)-(5-phospho-beta-D-ribosyl)glycinamide + L-glutamine + ATP + H2O = 2-formamido-N(1)-(5-O-phospho-beta-D-ribosyl)acetamidine + L-glutamate + ADP + phosphate + H(+). It catalyses the reaction L-glutamine + H2O = L-glutamate + NH4(+). The protein operates within purine metabolism; IMP biosynthesis via de novo pathway; 5-amino-1-(5-phospho-D-ribosyl)imidazole from N(2)-formyl-N(1)-(5-phospho-D-ribosyl)glycinamide: step 1/2. Its function is as follows. Part of the phosphoribosylformylglycinamidine synthase complex involved in the purines biosynthetic pathway. Catalyzes the ATP-dependent conversion of formylglycinamide ribonucleotide (FGAR) and glutamine to yield formylglycinamidine ribonucleotide (FGAM) and glutamate. The FGAM synthase complex is composed of three subunits. PurQ produces an ammonia molecule by converting glutamine to glutamate. PurL transfers the ammonia molecule to FGAR to form FGAM in an ATP-dependent manner. PurS interacts with PurQ and PurL and is thought to assist in the transfer of the ammonia molecule from PurQ to PurL. In Thermus thermophilus (strain ATCC BAA-163 / DSM 7039 / HB27), this protein is Phosphoribosylformylglycinamidine synthase subunit PurQ.